We begin with the raw amino-acid sequence, 146 residues long: Large ribosomal subunit protein uL15 (146 aa).

The segment covering 1–13 (MKLHELRPAEGSR) has biased composition (basic and acidic residues). The interval 1 to 55 (MKLHELRPAEGSRKSPKRVGRGTGSGLGKTSARGENGQNSRSGGGVRPGFEGGQM) is disordered. Positions 42-52 (SGGGVRPGFEG) are enriched in gly residues.

The protein belongs to the universal ribosomal protein uL15 family. As to quaternary structure, part of the 50S ribosomal subunit.

Binds to the 23S rRNA. This chain is Large ribosomal subunit protein uL15, found in Clostridium tetani (strain Massachusetts / E88).